We begin with the raw amino-acid sequence, 259 residues long: uncharacterized protein (259 aa).

The protein to M.thermoautotrophicum MTH738.

This is an uncharacterized protein from Methanocaldococcus jannaschii (strain ATCC 43067 / DSM 2661 / JAL-1 / JCM 10045 / NBRC 100440) (Methanococcus jannaschii).